Consider the following 494-residue polypeptide: UPF0371 protein SUB1165 (494 aa).

It belongs to the UPF0371 family.

The protein is UPF0371 protein SUB1165 of Streptococcus uberis (strain ATCC BAA-854 / 0140J).